Here is a 795-residue protein sequence, read N- to C-terminus: Plakophilin-2 (795 aa).

A required for binding to single-stranded DNA region spans residues 1–318 (MAVPGSLAEC…MTLERAVNML (318 aa)). The residue at position 44 (serine 44) is a Phosphoserine. Omega-N-methylarginine is present on arginine 46. A phosphoserine mark is found at serine 82, serine 132, serine 135, serine 151, serine 154, serine 155, serine 172, serine 188, and serine 232. Disordered stretches follow at residues 197–233 (GTARRPPGCGSFSDAVFDNGPLKPTMPTHPPGTSHSA) and 245–274 (SQARLQSTQSRTARSSWPRSSVRSSLREPG). The span at 245–257 (SQARLQSTQSRTA) shows a compositional bias: polar residues. Residues 258 to 268 (RSSWPRSSVRS) are compositionally biased toward low complexity. Serine 265 and serine 287 each carry phosphoserine. 8 ARM repeats span residues 299–339 (DAQL…QHES), 343–382 (SEARKRVNQLRGIPKLLQLLKLQNEDVQRAACGALRNLVF), 385–425 (NDNK…NLSS), 484–530 (PDGR…NLSY), 585–625 (PHGI…NLTA), 633–672 (LVARMVVQKENGLQHTRKMLHVGDPSVKKTAVSLLRNLSR), 677–718 (QNEI…NLMQ), and 721–763 (YQNA…SLWA).

This sequence belongs to the beta-catenin family. In terms of assembly, interacts with DSC2. Interacts with JUP. Interacts with KRT5/CK5, KRT8/CK8, KRT14/CK14, KRT18/CK18 and VIM. Interacts (via N-terminus) with MARK3/C-TAK1. Interacts with DSP. Interacts with DSG1, DSG2 and DSG3. Interacts (via N-terminus) with CTNNB1. Interacts with CDH1. Interacts with the RNA polymerase III (Pol III) complex proteins POLR3A/RPC155, POLR3F/RPC39 and POLR3C/RPC82. Interacts with CTNNA3. Interacts (via N-terminus) with SCN5A/Nav1.5. Interacts with ANK3/ANKG and GJA1/CX43. In terms of tissue distribution, expressed in cardiomyocytes in the heart (at protein level).

It localises to the nucleus. The protein resides in the cell junction. Its subcellular location is the desmosome. It is found in the cytoplasm. Its function is as follows. A component of desmosome cell-cell junctions which are required for positive regulation of cellular adhesion. Regulates focal adhesion turnover resulting in changes in focal adhesion size, cell adhesion and cell spreading, potentially via transcriptional modulation of beta-integrins. Required to maintain gingival epithelial barrier function. Important component of the desmosome that is also required for localization of desmosome component proteins such as DSC2, DSG2 and JUP to the desmosome cell-cell junction. Required for the formation of desmosome cell junctions in cardiomyocytes, thereby required for the correct formation of the heart, specifically trabeculation and formation of the atria walls. Loss of desmosome cell junctions leads to mis-localization of DSP and DSG2 resulting in disruption of cell-cell adhesion and disordered intermediate filaments. Modulates profibrotic gene expression in cardiomyocytes via regulation of DSP expression and subsequent activation of downstream TGFB1 and MAPK14/p38 MAPK signaling. Required for cardiac sodium current propagation and electrical synchrony in cardiac myocytes, via ANK3 stabilization and modulation of SCN5A/Nav1.5 localization to cell-cell junctions. Required for mitochondrial function, nuclear envelope integrity and positive regulation of SIRT3 transcription via maintaining DES localization at its nuclear envelope and cell tip anchoring points, and thereby preserving regulation of the transcriptional program. Maintenance of nuclear envelope integrity protects against DNA damage and transcriptional dysregulation of genes, especially those involved in the electron transport chain, thereby preserving mitochondrial function and protecting against superoxide radical anion generation. Binds single-stranded DNA (ssDNA). May regulate the localization of GJA1 to gap junctions in intercalated disks of the heart. This is Plakophilin-2 from Mus musculus (Mouse).